Reading from the N-terminus, the 309-residue chain is Nucleotide-binding protein cgR_1639 (309 aa).

32-39 lines the ATP pocket; sequence GMSGAGLS. GTP is bound at residue 83–86; it reads DVRS.

This sequence belongs to the RapZ-like family.

Functionally, displays ATPase and GTPase activities. The polypeptide is Nucleotide-binding protein cgR_1639 (Corynebacterium glutamicum (strain R)).